The primary structure comprises 370 residues: Anhydro-N-acetylmuramic acid kinase (370 aa).

13–20 (GTSMDGID) is an ATP binding site.

The protein belongs to the anhydro-N-acetylmuramic acid kinase family.

It carries out the reaction 1,6-anhydro-N-acetyl-beta-muramate + ATP + H2O = N-acetyl-D-muramate 6-phosphate + ADP + H(+). The protein operates within amino-sugar metabolism; 1,6-anhydro-N-acetylmuramate degradation. It functions in the pathway cell wall biogenesis; peptidoglycan recycling. Functionally, catalyzes the specific phosphorylation of 1,6-anhydro-N-acetylmuramic acid (anhMurNAc) with the simultaneous cleavage of the 1,6-anhydro ring, generating MurNAc-6-P. Is required for the utilization of anhMurNAc either imported from the medium or derived from its own cell wall murein, and thus plays a role in cell wall recycling. The protein is Anhydro-N-acetylmuramic acid kinase of Rhizobium etli (strain ATCC 51251 / DSM 11541 / JCM 21823 / NBRC 15573 / CFN 42).